The chain runs to 2367 residues: RNA1 polyprotein (2367 aa).

At 587 to 1194 (AKCEDLAVVS…GGRLLLILCS (608 aa)) the chain is on the cytoplasmic side. The 165-residue stretch at 776–940 (ELRTLRNDMA…AGVAFNPHDS (165 aa)) folds into the SF3 helicase domain. 804–811 (GPPGVGKT) lines the ATP pocket. Residues 1195–1215 (CMLLGIACYTFFNALAILIGG) traverse the membrane as a helical segment. Residues 1216-1235 (TSVAAGAAAMVDIGACGSTS) are Lumenal-facing. A Peptidase C3 domain is found at 1258-1468 (PAVWSEETGH…YVCKFPHIEV (211 aa)). Residues histidine 1302, glutamate 1339, and cysteine 1432 each act as for picornain 3C-like protease activity in the active site. The RdRp catalytic domain maps to 1832 to 1957 (DKMYCCDYSK…GIHPNIESAF (126 aa)).

It belongs to the nepoviruses RNA1 polyprotein family. Specific enzymatic cleavages by picornain 3C-like protease in vivo yield mature proteins. Picornain 3C-like protease is autocatalytically processed. In terms of processing, VPg is uridylylated by the polymerase and is covalently linked to the 5'-end of genomic RNA. This uridylylated form acts as a nucleotide-peptide primer for the polymerase.

The protein resides in the host endoplasmic reticulum lumen. The protein localises to the host endoplasmic reticulum membrane. It catalyses the reaction RNA(n) + a ribonucleoside 5'-triphosphate = RNA(n+1) + diphosphate. Functionally, picornain 3C-like protease is a thiol protease that cleaves the P1 and P2 polyproteins. The polypeptide is RNA1 polyprotein (Fragaria vesca (Woodland strawberry)).